The chain runs to 489 residues: Serine/threonine-protein kinase BSK2 (489 aa).

The tract at residues 1 to 30 (MGCLHSKTANLPSSDDPSAPNKPESVNGDQ) is disordered. The N-myristoyl glycine moiety is linked to residue Gly2. Residues 7–16 (KTANLPSSDD) are compositionally biased toward polar residues. The 267-residue stretch at 56-322 (SCIVSEGGEK…QEEVASHVLM (267 aa)) folds into the Protein kinase domain. Residues 62–70 (GGEKAPNVV) and Lys84 each bind ATP. Residue Asp178 is the Proton acceptor of the active site.

The protein belongs to the protein kinase superfamily. Ser/Thr protein kinase family. Post-translationally, phosphorylated by BRI1 upon brassinolide (BL) treatment.

Its subcellular location is the cell membrane. The enzyme catalyses L-seryl-[protein] + ATP = O-phospho-L-seryl-[protein] + ADP + H(+). It catalyses the reaction L-threonyl-[protein] + ATP = O-phospho-L-threonyl-[protein] + ADP + H(+). In terms of biological role, probable serine/threonine kinase that acts as a positive regulator of brassinosteroid (BR) signaling downstream of the receptor kinase BRI1. Mediates signal transduction from BRI1 by functioning as substrate of BRI1. This is Serine/threonine-protein kinase BSK2 from Arabidopsis thaliana (Mouse-ear cress).